Reading from the N-terminus, the 481-residue chain is Glutamine synthetase (481 aa).

Residues 22 to 106 (NEVEFVDFRF…VFCDVYDVYK (85 aa)) enclose the GS beta-grasp domain. Residues 114–481 (PRSIAKKALQ…PFEFITTYSC (368 aa)) form the GS catalytic domain. 4 residues coordinate Mg(2+): Glu139, Glu141, Glu223, and Glu230. L-glutamate-binding positions include 274-275 (NG) and Gly275. Residue His279 participates in Mg(2+) binding. Residues 281–283 (HVS) and Ser283 contribute to the ATP site. 3 residues coordinate L-glutamate: Arg331, Glu337, and Arg349. Residues Arg349 and Arg354 each coordinate ATP. Residue Glu367 coordinates Mg(2+). Arg369 contributes to the L-glutamate binding site.

Belongs to the glutamine synthetase family. Oligomer of 12 subunits arranged in the form of two hexameric ring. The cofactor is Mg(2+).

Its subcellular location is the cytoplasm. The catalysed reaction is L-glutamate + NH4(+) + ATP = L-glutamine + ADP + phosphate + H(+). Its activity is regulated as follows. The activity of this enzyme could be controlled by adenylation under conditions of abundant glutamine. Its function is as follows. Catalyzes the ATP-dependent biosynthesis of glutamine from glutamate and ammonia. The sequence is that of Glutamine synthetase from Helicobacter pylori (strain ATCC 700392 / 26695) (Campylobacter pylori).